A 235-amino-acid polypeptide reads, in one-letter code: (5-formylfuran-3-yl)methyl phosphate synthase (235 aa).

Lysine 27 (schiff-base intermediate with substrate) is an active-site residue. Lysine 85 serves as the catalytic Proton acceptor.

It belongs to the MfnB family.

It carries out the reaction 2 D-glyceraldehyde 3-phosphate = 4-(hydroxymethyl)-2-furancarboxaldehyde phosphate + phosphate + 2 H2O. It participates in cofactor biosynthesis; methanofuran biosynthesis. Functionally, catalyzes the formation of 4-(hydroxymethyl)-2-furancarboxaldehyde phosphate (4-HFC-P) from two molecules of glyceraldehyde-3-P (GA-3-P). The polypeptide is (5-formylfuran-3-yl)methyl phosphate synthase (Methanococcus aeolicus (strain ATCC BAA-1280 / DSM 17508 / OCM 812 / Nankai-3)).